Reading from the N-terminus, the 411-residue chain is Arginine biosynthesis bifunctional protein ArgJ (411 aa).

Substrate contacts are provided by Thr160, Lys186, Thr197, Glu283, Asn406, and Thr411. Thr197 functions as the Nucleophile in the catalytic mechanism.

Belongs to the ArgJ family. Heterotetramer of two alpha and two beta chains.

It is found in the cytoplasm. The enzyme catalyses N(2)-acetyl-L-ornithine + L-glutamate = N-acetyl-L-glutamate + L-ornithine. The catalysed reaction is L-glutamate + acetyl-CoA = N-acetyl-L-glutamate + CoA + H(+). It participates in amino-acid biosynthesis; L-arginine biosynthesis; L-ornithine and N-acetyl-L-glutamate from L-glutamate and N(2)-acetyl-L-ornithine (cyclic): step 1/1. It functions in the pathway amino-acid biosynthesis; L-arginine biosynthesis; N(2)-acetyl-L-ornithine from L-glutamate: step 1/4. Feedback inhibition by L-ornithine. Its function is as follows. Catalyzes two activities which are involved in the cyclic version of arginine biosynthesis: the synthesis of N-acetylglutamate from glutamate and acetyl-CoA as the acetyl donor, and of ornithine by transacetylation between N(2)-acetylornithine and glutamate. This chain is Arginine biosynthesis bifunctional protein ArgJ, found in Halalkalibacterium halodurans (strain ATCC BAA-125 / DSM 18197 / FERM 7344 / JCM 9153 / C-125) (Bacillus halodurans).